A 338-amino-acid polypeptide reads, in one-letter code: S-adenosylmethionine:tRNA ribosyltransferase-isomerase (338 aa).

This sequence belongs to the QueA family. Monomer.

It is found in the cytoplasm. It catalyses the reaction 7-aminomethyl-7-carbaguanosine(34) in tRNA + S-adenosyl-L-methionine = epoxyqueuosine(34) in tRNA + adenine + L-methionine + 2 H(+). Its pathway is tRNA modification; tRNA-queuosine biosynthesis. Transfers and isomerizes the ribose moiety from AdoMet to the 7-aminomethyl group of 7-deazaguanine (preQ1-tRNA) to give epoxyqueuosine (oQ-tRNA). In Francisella tularensis subsp. mediasiatica (strain FSC147), this protein is S-adenosylmethionine:tRNA ribosyltransferase-isomerase.